The primary structure comprises 1076 residues: Nickel-cobalt-cadmium resistance protein NccA (1076 aa).

Transmembrane regions (helical) follow at residues 14–34 (WLVL…LNLL), 367–387 (VAKN…ALLG), 391–411 (AAVI…IGMN), 419–439 (LMSL…IIVE), 476–496 (TVYG…FQGV), 503–523 (PMVI…LTFV), 562–582 (MPFL…FTFV), 904–924 (LAII…MAIG), 929–949 (TATV…ALVL), 960–980 (VGFI…ISAI), 1004–1024 (PVLM…IATG), and 1036–1056 (VVIG…PAVC).

The protein belongs to the resistance-nodulation-cell division (RND) (TC 2.A.6) family.

The protein localises to the cell membrane. In terms of biological role, component of the NCC cation-efflux system that confers resistance to nickel, cobalt and cadmium. May form a membrane tunnel, which allows ion transport across the membrane. This chain is Nickel-cobalt-cadmium resistance protein NccA (nccA), found in Alcaligenes xylosoxydans xylosoxydans (Achromobacter xylosoxidans).